A 117-amino-acid chain; its full sequence is uncharacterized protein (117 aa).

This sequence to H.influenzae HI_1162 and to HI_0925.

This is an uncharacterized protein from Escherichia coli (strain K12).